The sequence spans 92 residues: Small ribosomal subunit protein uS19 (92 aa).

Belongs to the universal ribosomal protein uS19 family.

Functionally, protein S19 forms a complex with S13 that binds strongly to the 16S ribosomal RNA. The chain is Small ribosomal subunit protein uS19 from Azorhizobium caulinodans (strain ATCC 43989 / DSM 5975 / JCM 20966 / LMG 6465 / NBRC 14845 / NCIMB 13405 / ORS 571).